Consider the following 397-residue polypeptide: Small ribosomal subunit protein mS29 (397 aa).

Residues 1-17 constitute a mitochondrion transit peptide; it reads MLKGMTRLVSRVHKLDP. Lysine 174 and lysine 206 each carry N6-acetyllysine.

The protein belongs to the mitochondrion-specific ribosomal protein mS29 family. Component of the mitochondrial ribosome small subunit (28S) which comprises a 12S rRNA and about 30 distinct proteins. Interacts with DELE1. Interacts with NOA1.

It is found in the mitochondrion. The catalysed reaction is GTP + H2O = GDP + phosphate + H(+). As a component of the mitochondrial small ribosomal subunit, it plays a role in the translation of mitochondrial mRNAs. Involved in mediating interferon-gamma-induced cell death. Displays GTPase activity in vitro. The protein is Small ribosomal subunit protein mS29 of Bos taurus (Bovine).